A 352-amino-acid polypeptide reads, in one-letter code: S-adenosylmethionine:tRNA ribosyltransferase-isomerase (352 aa).

This sequence belongs to the QueA family. Monomer.

It is found in the cytoplasm. It carries out the reaction 7-aminomethyl-7-carbaguanosine(34) in tRNA + S-adenosyl-L-methionine = epoxyqueuosine(34) in tRNA + adenine + L-methionine + 2 H(+). Its pathway is tRNA modification; tRNA-queuosine biosynthesis. In terms of biological role, transfers and isomerizes the ribose moiety from AdoMet to the 7-aminomethyl group of 7-deazaguanine (preQ1-tRNA) to give epoxyqueuosine (oQ-tRNA). This chain is S-adenosylmethionine:tRNA ribosyltransferase-isomerase, found in Paraburkholderia xenovorans (strain LB400).